Reading from the N-terminus, the 60-residue chain is Venom protein 4.1 (60 aa).

The first 26 residues, 1–26 (MKALCAILLVLFACSVMFEHFSISTA), serve as a signal peptide directing secretion.

The protein belongs to the non-disulfide-bridged peptide (NDBP) superfamily. In terms of tissue distribution, expressed by the venom gland.

It is found in the secreted. The protein is Venom protein 4.1 of Lychas mucronatus (Chinese swimming scorpion).